We begin with the raw amino-acid sequence, 383 residues long: Chaperone protein DnaJ (383 aa).

Residues 4 to 68 enclose the J domain; the sequence is DLYETLNVSR…DQRARYDRFG (65 aa). The CR-type zinc finger occupies 139-221; the sequence is GGEKEITINH…CSGRGRNQKQ (83 aa). Cys-152, Cys-155, Cys-169, Cys-172, Cys-195, Cys-198, Cys-209, and Cys-212 together coordinate Zn(2+). CXXCXGXG motif repeat units follow at residues 152–159, 169–176, 195–202, and 209–216; these read CETCRGSG, CRNCGGQG, CPNCQGTG, and CPTCSGRG.

Belongs to the DnaJ family. In terms of assembly, homodimer. Requires Zn(2+) as cofactor.

It is found in the cytoplasm. Participates actively in the response to hyperosmotic and heat shock by preventing the aggregation of stress-denatured proteins and by disaggregating proteins, also in an autonomous, DnaK-independent fashion. Unfolded proteins bind initially to DnaJ; upon interaction with the DnaJ-bound protein, DnaK hydrolyzes its bound ATP, resulting in the formation of a stable complex. GrpE releases ADP from DnaK; ATP binding to DnaK triggers the release of the substrate protein, thus completing the reaction cycle. Several rounds of ATP-dependent interactions between DnaJ, DnaK and GrpE are required for fully efficient folding. Also involved, together with DnaK and GrpE, in the DNA replication of plasmids through activation of initiation proteins. The sequence is that of Chaperone protein DnaJ from Gloeobacter violaceus (strain ATCC 29082 / PCC 7421).